Here is a 62-residue protein sequence, read N- to C-terminus: Large ribosomal subunit protein uL30 (62 aa).

It belongs to the universal ribosomal protein uL30 family. Part of the 50S ribosomal subunit.

The polypeptide is Large ribosomal subunit protein uL30 (Gluconobacter oxydans (strain 621H) (Gluconobacter suboxydans)).